A 460-amino-acid polypeptide reads, in one-letter code: Argininosuccinate lyase (460 aa).

This sequence belongs to the lyase 1 family. Argininosuccinate lyase subfamily.

It localises to the cytoplasm. The catalysed reaction is 2-(N(omega)-L-arginino)succinate = fumarate + L-arginine. The protein operates within amino-acid biosynthesis; L-arginine biosynthesis; L-arginine from L-ornithine and carbamoyl phosphate: step 3/3. This Edwardsiella ictaluri (strain 93-146) protein is Argininosuccinate lyase.